Here is a 120-residue protein sequence, read N- to C-terminus: Chaperonin GroEL (120 aa).

23-27 (DGTTT) lines the ATP pocket.

It belongs to the chaperonin (HSP60) family. Forms a cylinder of 14 subunits composed of two heptameric rings stacked back-to-back. Interacts with the co-chaperonin GroES.

The protein localises to the cytoplasm. The catalysed reaction is ATP + H2O + a folded polypeptide = ADP + phosphate + an unfolded polypeptide.. In terms of biological role, together with its co-chaperonin GroES, plays an essential role in assisting protein folding. The GroEL-GroES system forms a nano-cage that allows encapsulation of the non-native substrate proteins and provides a physical environment optimized to promote and accelerate protein folding. This Mycolicibacterium pulveris (Mycobacterium pulveris) protein is Chaperonin GroEL.